Consider the following 1087-residue polypeptide: Exportin-7 (1087 aa).

An Importin N-terminal domain is found at Ala-30–Thr-96.

Belongs to the exportin family.

It localises to the cytoplasm. The protein localises to the nucleus. Mediates the nuclear export of proteins (cargos) with broad substrate specificity. In Gallus gallus (Chicken), this protein is Exportin-7 (XPO7).